Consider the following 253-residue polypeptide: Small ribosomal subunit protein uS2 (253 aa).

This sequence belongs to the universal ribosomal protein uS2 family.

The chain is Small ribosomal subunit protein uS2 from Hahella chejuensis (strain KCTC 2396).